The sequence spans 507 residues: Histidine ammonia-lyase (507 aa).

A cross-link (5-imidazolinone (Ala-Gly)) is located at residues 141–143 (ASG). 2,3-didehydroalanine (Ser) is present on serine 142.

This sequence belongs to the PAL/histidase family. Post-translationally, contains an active site 4-methylidene-imidazol-5-one (MIO), which is formed autocatalytically by cyclization and dehydration of residues Ala-Ser-Gly.

Its subcellular location is the cytoplasm. It catalyses the reaction L-histidine = trans-urocanate + NH4(+). Its pathway is amino-acid degradation; L-histidine degradation into L-glutamate; N-formimidoyl-L-glutamate from L-histidine: step 1/3. The chain is Histidine ammonia-lyase from Burkholderia mallei (strain NCTC 10247).